A 177-amino-acid chain; its full sequence is Ribosome maturation factor RimP (177 aa).

A compositionally biased stretch (basic and acidic residues) spans 153–171 (VEFNRKDTKNDNQTEHDNK). The segment at 153–177 (VEFNRKDTKNDNQTEHDNKTEEEEA) is disordered.

Belongs to the RimP family.

Its subcellular location is the cytoplasm. Required for maturation of 30S ribosomal subunits. This Streptomyces coelicolor (strain ATCC BAA-471 / A3(2) / M145) protein is Ribosome maturation factor RimP.